The following is a 117-amino-acid chain: Basic phospholipase A2 pseudexin A chain (117 aa).

7 cysteine pairs are disulfide-bonded: Cys11/Cys71, Cys27/Cys117, Cys29/Cys45, Cys44/Cys98, Cys51/Cys91, Cys60/Cys84, and Cys78/Cys89. Positions 28, 30, and 32 each coordinate Ca(2+). The active site involves His48. Asp49 is a binding site for Ca(2+). Asp92 is an active-site residue.

The protein belongs to the phospholipase A2 family. Group I subfamily. D49 sub-subfamily. Ca(2+) is required as a cofactor. Expressed by the venom gland.

It localises to the secreted. It catalyses the reaction a 1,2-diacyl-sn-glycero-3-phosphocholine + H2O = a 1-acyl-sn-glycero-3-phosphocholine + a fatty acid + H(+). Its function is as follows. PLA2 catalyzes the calcium-dependent hydrolysis of the 2-acyl groups in 3-sn-phosphoglycerides. The chain is Basic phospholipase A2 pseudexin A chain from Pseudechis porphyriacus (Red-bellied black snake).